A 202-amino-acid polypeptide reads, in one-letter code: LexA repressor (202 aa).

Residues 28 to 48 constitute a DNA-binding region (H-T-H motif); that stretch reads RAEIAQRLGFRSPNAAEEHLK. Catalysis depends on for autocatalytic cleavage activity residues serine 119 and lysine 156.

This sequence belongs to the peptidase S24 family. In terms of assembly, homodimer.

The enzyme catalyses Hydrolysis of Ala-|-Gly bond in repressor LexA.. In terms of biological role, represses a number of genes involved in the response to DNA damage (SOS response), including recA and lexA. Binds to the 16 bp palindromic sequence 5'-CTGTATATATATACAG-3'. In the presence of single-stranded DNA, RecA interacts with LexA causing an autocatalytic cleavage which disrupts the DNA-binding part of LexA, leading to derepression of the SOS regulon and eventually DNA repair. The protein is LexA repressor of Citrobacter koseri (strain ATCC BAA-895 / CDC 4225-83 / SGSC4696).